Here is a 1588-residue protein sequence, read N- to C-terminus: uncharacterized protein (1588 aa).

Positions 486-495 (RKRLTSKTED) are enriched in basic and acidic residues. Disordered regions lie at residues 486-515 (RKRL…KRRP) and 1146-1176 (GGQD…RELN). A compositionally biased stretch (polar residues) spans 498–507 (NQWTRDCQNS). A compositionally biased stretch (low complexity) spans 1150–1169 (NVSDQSENQSENQSLESETS).

Its subcellular location is the virion. This is an uncharacterized protein from Acanthamoeba polyphaga (Amoeba).